Here is a 100-residue protein sequence, read N- to C-terminus: Urease subunit gamma (100 aa).

The protein belongs to the urease gamma subunit family. In terms of assembly, heterotrimer of UreA (gamma), UreB (beta) and UreC (alpha) subunits. Three heterotrimers associate to form the active enzyme.

It is found in the cytoplasm. The enzyme catalyses urea + 2 H2O + H(+) = hydrogencarbonate + 2 NH4(+). It participates in nitrogen metabolism; urea degradation; CO(2) and NH(3) from urea (urease route): step 1/1. The chain is Urease subunit gamma from Methylocella silvestris (strain DSM 15510 / CIP 108128 / LMG 27833 / NCIMB 13906 / BL2).